The primary structure comprises 138 residues: Large ribosomal subunit protein uL16 (138 aa).

Positions 1 to 16 (MLIPRRVKHRKQHHPS) are enriched in basic residues. The disordered stretch occupies residues 1 to 25 (MLIPRRVKHRKQHHPSRSGAAKGGT).

The protein belongs to the universal ribosomal protein uL16 family. As to quaternary structure, part of the 50S ribosomal subunit.

Its function is as follows. Binds 23S rRNA and is also seen to make contacts with the A and possibly P site tRNAs. This chain is Large ribosomal subunit protein uL16, found in Rhodococcus erythropolis (strain PR4 / NBRC 100887).